The chain runs to 395 residues: Enoyl-[acyl-carrier-protein] reductase [NADH] (395 aa).

Residues 48–53, 74–75, 111–112, and 139–140 each bind NAD(+); these read GASTGY, FE, DA, and LA. Tyrosine 225 contributes to the substrate binding site. Tyrosine 235 serves as the catalytic Proton donor. NAD(+)-binding positions include lysine 244 and 273 to 275; that span reads LVT.

It belongs to the TER reductase family. As to quaternary structure, monomer.

The catalysed reaction is a 2,3-saturated acyl-[ACP] + NAD(+) = a (2E)-enoyl-[ACP] + NADH + H(+). It participates in lipid metabolism; fatty acid biosynthesis. Involved in the final reduction of the elongation cycle of fatty acid synthesis (FAS II). Catalyzes the reduction of a carbon-carbon double bond in an enoyl moiety that is covalently linked to an acyl carrier protein (ACP). In Saccharophagus degradans (strain 2-40 / ATCC 43961 / DSM 17024), this protein is Enoyl-[acyl-carrier-protein] reductase [NADH].